A 340-amino-acid polypeptide reads, in one-letter code: Mitochondrial amidoxime-reducing component 1 (340 aa).

Gly-2 carries N-myristoyl glycine lipidation. At 2–24 the chain is on the mitochondrial matrix side; it reads GAGSWALTLFGFSAFRVPGQPRS. The chain crosses the membrane as a helical; Signal-anchor for type II membrane protein span at residues 25 to 44; that stretch reads TWLGVAALGLAAVALGTVAW. At 45–340 the chain is on the cytoplasmic side; that stretch reads RRARPRRRRR…VGDPVYLLGQ (296 aa). Mo-molybdopterin contacts are provided by Lys-70, Ser-71, and Arg-95. The interval 96 to 186 is MOSC N-terminal region; sequence FWLVINEEGN…KMQSCRLVHF (91 aa). In terms of domain architecture, MOSC spans 191 to 338; it reads RPRSSRQMKA…IRVGDPVYLL (148 aa). 7 residues coordinate Mo-molybdopterin: Ser-214, Arg-241, Asn-243, Thr-274, Arg-275, Cys-276, and Tyr-320.

As to quaternary structure, component of a complex composed of cytochrome b5, NADH-cytochrome b5 reductase and MTARC1. It depends on Mo-molybdopterin as a cofactor.

It localises to the mitochondrion outer membrane. Its subcellular location is the membrane. It catalyses the reaction N(omega)-hydroxy-L-arginine + 2 Fe(II)-[cytochrome b5] + 2 H(+) = L-arginine + 2 Fe(III)-[cytochrome b5] + H2O. Catalyzes the reduction of N-oxygenated molecules, acting as a counterpart of cytochrome P450 and flavin-containing monooxygenases in metabolic cycles. As a component of prodrug-converting system, reduces a multitude of N-hydroxylated prodrugs particularly amidoximes, leading to increased drug bioavailability. May be involved in mitochondrial N(omega)-hydroxy-L-arginine (NOHA) reduction, regulating endogenous nitric oxide levels and biosynthesis. Postulated to cleave the N-OH bond of N-hydroxylated substrates in concert with electron transfer from NADH to cytochrome b5 reductase then to cytochrome b5, the ultimate electron donor that primes the active site for substrate reduction. This Mus musculus (Mouse) protein is Mitochondrial amidoxime-reducing component 1 (Mtarc1).